We begin with the raw amino-acid sequence, 352 residues long: Glucose-6-phosphatase catalytic subunit 1 (352 aa).

The Lumenal segment spans residues 1–27 (MDLLHSWGVELAVYLQTRYGKYEGLFD). A helical transmembrane segment spans residues 28–48 (LASTVADLHTTFFWLFPIWFH). The Cytoplasmic segment spans residues 49-56 (LRRDTALR). Residues 57-77 (LIWVAVIGDWLNLVLKWVLFG) form a helical membrane-spanning segment. Residues 78-113 (ERPYWWVHETKFYGAGPAPSLQQFPITCETGPGSPS) lie on the Lumenal side of the membrane. Arginine 79 provides a ligand contact to substrate. The helical transmembrane segment at 114–134 (GHAMGAAGVWYVMVTALLSIA) threads the bilayer. Residue histidine 115 is the Proton donor of the active site. Residues 135–141 (REKQCPP) lie on the Cytoplasmic side of the membrane. A helical membrane pass occupies residues 142 to 162 (LLYRFLYIGLWMLMGLVELVV). At 163–166 (CISR) the chain is on the lumenal side. Arginine 166 is a binding site for substrate. The helical transmembrane segment at 167 to 187 (VYMAAHFPHQVIAGIITGTLV) threads the bilayer. Histidine 172 serves as the catalytic Nucleophile. Residues 188–205 (AEVVSKEKWIYSASLKKY) are Cytoplasmic-facing. The helical transmembrane segment at 206–226 (FLITLFLTSFAVGFYVLLKAL) threads the bilayer. The Lumenal portion of the chain corresponds to 227-256 (DVDLLWTMEKAQKWCIRPEWVHLDSAPFAS). A helical membrane pass occupies residues 257–276 (LLRNMGSLFGLGLGLHSPFY). Residues 277 to 289 (KTTKMRIMSAPLR) lie on the Cytoplasmic side of the membrane. The helical transmembrane segment at 290–310 (IGCIVISVSLLHLLDGWTFSP) threads the bilayer. At 311–324 (ENHMTFYALSFGKS) the chain is on the lumenal side. The helical transmembrane segment at 325–345 (AVALLIPTTLVPWALSKIYPV) threads the bilayer. The Cytoplasmic portion of the chain corresponds to 346–352 (KTEGKNL). The Prevents secretion from ER signature appears at 349 to 352 (GKNL).

The protein belongs to the glucose-6-phosphatase family.

Its subcellular location is the endoplasmic reticulum membrane. It catalyses the reaction D-glucose 6-phosphate + H2O = D-glucose + phosphate. It participates in carbohydrate biosynthesis; gluconeogenesis. Hydrolyzes glucose-6-phosphate to glucose in the endoplasmic reticulum. Forms with the glucose-6-phosphate transporter (SLC37A4/G6PT) the complex responsible for glucose production in the terminal step of glycogenolysis and gluconeogenesis. Hence, it is the key enzyme in homeostatic regulation of blood glucose levels. The sequence is that of Glucose-6-phosphatase catalytic subunit 1 (g6pc1) from Haplochromis nubilus (Blue Victoria mouthbrooder).